The following is a 380-amino-acid chain: Queuine tRNA-ribosyltransferase (380 aa).

Catalysis depends on D96, which acts as the Proton acceptor. Substrate-binding positions include 96–100 (DSGGF), D150, Q193, and G220. The RNA binding stretch occupies residues 251–257 (GVGAPDS). Catalysis depends on D270, which acts as the Nucleophile. The interval 275-279 (TRIAR) is RNA binding; important for wobble base 34 recognition. 4 residues coordinate Zn(2+): C308, C310, C313, and H339.

It belongs to the queuine tRNA-ribosyltransferase family. As to quaternary structure, homodimer. Within each dimer, one monomer is responsible for RNA recognition and catalysis, while the other monomer binds to the replacement base PreQ1. Requires Zn(2+) as cofactor.

The catalysed reaction is 7-aminomethyl-7-carbaguanine + guanosine(34) in tRNA = 7-aminomethyl-7-carbaguanosine(34) in tRNA + guanine. It participates in tRNA modification; tRNA-queuosine biosynthesis. Catalyzes the base-exchange of a guanine (G) residue with the queuine precursor 7-aminomethyl-7-deazaguanine (PreQ1) at position 34 (anticodon wobble position) in tRNAs with GU(N) anticodons (tRNA-Asp, -Asn, -His and -Tyr). Catalysis occurs through a double-displacement mechanism. The nucleophile active site attacks the C1' of nucleotide 34 to detach the guanine base from the RNA, forming a covalent enzyme-RNA intermediate. The proton acceptor active site deprotonates the incoming PreQ1, allowing a nucleophilic attack on the C1' of the ribose to form the product. After dissociation, two additional enzymatic reactions on the tRNA convert PreQ1 to queuine (Q), resulting in the hypermodified nucleoside queuosine (7-(((4,5-cis-dihydroxy-2-cyclopenten-1-yl)amino)methyl)-7-deazaguanosine). The sequence is that of Queuine tRNA-ribosyltransferase from Streptococcus pneumoniae (strain Hungary19A-6).